A 56-amino-acid chain; its full sequence is Small ribosomal subunit protein uS14 (56 aa).

Cys-21, Cys-24, Cys-39, and Cys-42 together coordinate Zn(2+).

Belongs to the universal ribosomal protein uS14 family. Component of the 40S small ribosomal subunit. The cofactor is Zn(2+).

It localises to the cytoplasm. It is found in the cytosol. Its subcellular location is the rough endoplasmic reticulum. In Ixodes scapularis (Black-legged tick), this protein is Small ribosomal subunit protein uS14 (RpS29).